A 257-amino-acid polypeptide reads, in one-letter code: Deoxyribose-phosphate aldolase (257 aa).

The Proton donor/acceptor role is filled by D102. The active-site Schiff-base intermediate with acetaldehyde is the K166. Catalysis depends on K198, which acts as the Proton donor/acceptor.

This sequence belongs to the DeoC/FbaB aldolase family. DeoC type 2 subfamily.

Its subcellular location is the cytoplasm. The enzyme catalyses 2-deoxy-D-ribose 5-phosphate = D-glyceraldehyde 3-phosphate + acetaldehyde. Its pathway is carbohydrate degradation; 2-deoxy-D-ribose 1-phosphate degradation; D-glyceraldehyde 3-phosphate and acetaldehyde from 2-deoxy-alpha-D-ribose 1-phosphate: step 2/2. Its function is as follows. Catalyzes a reversible aldol reaction between acetaldehyde and D-glyceraldehyde 3-phosphate to generate 2-deoxy-D-ribose 5-phosphate. In Aeromonas hydrophila subsp. hydrophila (strain ATCC 7966 / DSM 30187 / BCRC 13018 / CCUG 14551 / JCM 1027 / KCTC 2358 / NCIMB 9240 / NCTC 8049), this protein is Deoxyribose-phosphate aldolase.